Reading from the N-terminus, the 229-residue chain is RNA pyrophosphohydrolase (229 aa).

The 144-residue stretch at 6-149 folds into the Nudix hydrolase domain; it reads GFRPNVGIIL…KRGVYEMALT (144 aa). The short motif at 38 to 59 is the Nudix box element; sequence GGIDRGETPEQAMFRELHEEVG. Positions 168–229 are disordered; it reads SGMRPREAHE…QVLHPDPGKA (62 aa).

The protein belongs to the Nudix hydrolase family. RppH subfamily. It depends on a divalent metal cation as a cofactor.

In terms of biological role, accelerates the degradation of transcripts by removing pyrophosphate from the 5'-end of triphosphorylated RNA, leading to a more labile monophosphorylated state that can stimulate subsequent ribonuclease cleavage. The sequence is that of RNA pyrophosphohydrolase from Delftia acidovorans (strain DSM 14801 / SPH-1).